Here is a 683-residue protein sequence, read N- to C-terminus: DNA-directed RNA polymerase subunit beta' (683 aa).

Zn(2+) is bound by residues Cys-69, Cys-71, Cys-87, and Cys-90. Asp-489, Asp-491, and Asp-493 together coordinate Mg(2+).

This sequence belongs to the RNA polymerase beta' chain family. RpoC1 subfamily. As to quaternary structure, in plastids the minimal PEP RNA polymerase catalytic core is composed of four subunits: alpha, beta, beta', and beta''. When a (nuclear-encoded) sigma factor is associated with the core the holoenzyme is formed, which can initiate transcription. Mg(2+) serves as cofactor. Requires Zn(2+) as cofactor.

It localises to the plastid. The protein localises to the chloroplast. It catalyses the reaction RNA(n) + a ribonucleoside 5'-triphosphate = RNA(n+1) + diphosphate. Its function is as follows. DNA-dependent RNA polymerase catalyzes the transcription of DNA into RNA using the four ribonucleoside triphosphates as substrates. The protein is DNA-directed RNA polymerase subunit beta' of Saccharum hybrid (Sugarcane).